Consider the following 235-residue polypeptide: Ribonuclease PH (235 aa).

Phosphate contacts are provided by residues R86 and 124 to 126 (GTR).

Belongs to the RNase PH family. In terms of assembly, homohexameric ring arranged as a trimer of dimers.

The enzyme catalyses tRNA(n+1) + phosphate = tRNA(n) + a ribonucleoside 5'-diphosphate. Its function is as follows. Phosphorolytic 3'-5' exoribonuclease that plays an important role in tRNA 3'-end maturation. Removes nucleotide residues following the 3'-CCA terminus of tRNAs; can also add nucleotides to the ends of RNA molecules by using nucleoside diphosphates as substrates, but this may not be physiologically important. Probably plays a role in initiation of 16S rRNA degradation (leading to ribosome degradation) during starvation. The protein is Ribonuclease PH of Francisella tularensis subsp. holarctica (strain FTNF002-00 / FTA).